Here is a 272-residue protein sequence, read N- to C-terminus: uncharacterized protein (272 aa).

Glu-163 is a catalytic residue.

The protein belongs to the glycosyl hydrolase 25 family.

This is an uncharacterized protein from Escherichia coli O157:H7.